Reading from the N-terminus, the 428-residue chain is MADKKAQLIIEGSAPVELPVLSGTMGPDVVDVRGLTATGHFTFDPGFMSTASCESKITYIDGDKGVLLHRGYPIEQLAEKSDYLETCYLLLNGELPTAAQKEQFVGTIKNHTMVHEQLKTFFNGFRRDAHPMAVMCGVIGALSAFYHDSLDINNPKHREVSAHRLIAKMPTIAAMVYKYSKGEPMMYPRNDLNYAENFLHMMFNTPCETKPISPVLAKAMDRIFILHADHEQNASTSTVRLAGSSGANPFACIASGIAALWGPAHGGANEAVLRMLDEIGDVSNIDKFVEKAKDKNDPFKLMGFGHRVYKNFDPRAKVMKQTCDEVLQELGINDPQLELAMKLEEIARHDPYFVERNLYPNVDFYSGIILKAIGIPTSMFTVIFALARTVGWISHWQEMLSGPYKIGRPRQLYTGHTQRDFTALKDRG.

Residues H265, H306, and D363 contribute to the active site.

It belongs to the citrate synthase family. As to quaternary structure, homohexamer.

The catalysed reaction is oxaloacetate + acetyl-CoA + H2O = citrate + CoA + H(+). The protein operates within carbohydrate metabolism; tricarboxylic acid cycle; isocitrate from oxaloacetate: step 1/2. With respect to regulation, allosterically inhibited by NADH. This is Citrate synthase (gltA) from Pseudomonas aeruginosa (strain ATCC 15692 / DSM 22644 / CIP 104116 / JCM 14847 / LMG 12228 / 1C / PRS 101 / PAO1).